A 502-amino-acid chain; its full sequence is Glutamate decarboxylase (502 aa).

N6-(pyridoxal phosphate)lysine is present on lysine 278. The tract at residues glycine 471–cysteine 502 is calmodulin-binding.

This sequence belongs to the group II decarboxylase family. Requires pyridoxal 5'-phosphate as cofactor.

The enzyme catalyses L-glutamate + H(+) = 4-aminobutanoate + CO2. Catalyzes the production of GABA. The calmodulin-binding is calcium-dependent and it is proposed that this may, directly or indirectly, form a calcium regulated control of GABA biosynthesis. This is Glutamate decarboxylase from Solanum lycopersicum (Tomato).